The following is a 656-amino-acid chain: Chaperone protein HtpG (656 aa).

The interval 1-364 (MSEQNPTDSK…SADLPLNVSR (364 aa)) is a; substrate-binding. The b stretch occupies residues 365-583 (EILQESRDVK…EGELSPQMIQ (219 aa)). Positions 584–656 (MLKQMGQDVP…LRRVNELLMK (73 aa)) are c.

Belongs to the heat shock protein 90 family. As to quaternary structure, homodimer.

The protein localises to the cytoplasm. Molecular chaperone. Has ATPase activity. The sequence is that of Chaperone protein HtpG from Psychrobacter arcticus (strain DSM 17307 / VKM B-2377 / 273-4).